Here is a 667-residue protein sequence, read N- to C-terminus: 1-deoxy-D-xylulose-5-phosphate synthase (667 aa).

Thiamine diphosphate-binding positions include His73 and 113-115 (SHA). A Mg(2+)-binding site is contributed by Asp145. Residues 146 to 147 (GA), Asn175, Tyr297, and Glu379 contribute to the thiamine diphosphate site. Asn175 serves as a coordination point for Mg(2+).

It belongs to the transketolase family. DXPS subfamily. As to quaternary structure, homodimer. Mg(2+) is required as a cofactor. The cofactor is thiamine diphosphate.

It carries out the reaction D-glyceraldehyde 3-phosphate + pyruvate + H(+) = 1-deoxy-D-xylulose 5-phosphate + CO2. The protein operates within metabolic intermediate biosynthesis; 1-deoxy-D-xylulose 5-phosphate biosynthesis; 1-deoxy-D-xylulose 5-phosphate from D-glyceraldehyde 3-phosphate and pyruvate: step 1/1. Its function is as follows. Catalyzes the acyloin condensation reaction between C atoms 2 and 3 of pyruvate and glyceraldehyde 3-phosphate to yield 1-deoxy-D-xylulose-5-phosphate (DXP). The protein is 1-deoxy-D-xylulose-5-phosphate synthase of Kocuria rhizophila (strain ATCC 9341 / DSM 348 / NBRC 103217 / DC2201).